Consider the following 323-residue polypeptide: Serine/threonine-protein phosphatase PP1 (323 aa).

The Mn(2+) site is built by aspartate 63, histidine 65, aspartate 91, and asparagine 123. Catalysis depends on histidine 124, which acts as the Proton donor. The Mn(2+) site is built by histidine 172 and histidine 247.

This sequence belongs to the PPP phosphatase family. PP-1 subfamily. Mn(2+) is required as a cofactor.

It catalyses the reaction O-phospho-L-seryl-[protein] + H2O = L-seryl-[protein] + phosphate. The enzyme catalyses O-phospho-L-threonyl-[protein] + H2O = L-threonyl-[protein] + phosphate. Plays an important role in the control of mitosis by reversing the action of the nimA kinase. This Emericella nidulans (strain FGSC A4 / ATCC 38163 / CBS 112.46 / NRRL 194 / M139) (Aspergillus nidulans) protein is Serine/threonine-protein phosphatase PP1 (bimG).